Consider the following 155-residue polypeptide: Ribonuclease 2B (155 aa).

The N-terminal stretch at Met1–Cys25 is a signal peptide. The active-site Proton acceptor is the His38. 4 disulfides stabilise this stretch: Cys47–Cys106, Cys61–Cys118, Cys79–Cys133, and Cys86–Cys94. Lys62 to Thr66 provides a ligand contact to substrate. N-linked (GlcNAc...) asparagine glycosylation occurs at Asn114. Catalysis depends on His150, which acts as the Proton donor.

The protein belongs to the pancreatic ribonuclease family.

It carries out the reaction an [RNA] containing cytidine + H2O = an [RNA]-3'-cytidine-3'-phosphate + a 5'-hydroxy-ribonucleotide-3'-[RNA].. The catalysed reaction is an [RNA] containing uridine + H2O = an [RNA]-3'-uridine-3'-phosphate + a 5'-hydroxy-ribonucleotide-3'-[RNA].. This is a non-secretory ribonuclease. It is a pyrimidine specific nuclease with a slight preference for U. Cytotoxin and helminthotoxin. Possesses a wide variety of biological activities. The chain is Ribonuclease 2B from Mus musculus (Mouse).